We begin with the raw amino-acid sequence, 188 residues long: Ribosome-recycling factor (188 aa).

It belongs to the RRF family.

It is found in the cytoplasm. Its function is as follows. Responsible for the release of ribosomes from messenger RNA at the termination of protein biosynthesis. May increase the efficiency of translation by recycling ribosomes from one round of translation to another. The sequence is that of Ribosome-recycling factor from Cereibacter sphaeroides (strain ATCC 17023 / DSM 158 / JCM 6121 / CCUG 31486 / LMG 2827 / NBRC 12203 / NCIMB 8253 / ATH 2.4.1.) (Rhodobacter sphaeroides).